We begin with the raw amino-acid sequence, 393 residues long: DNA-directed RNA polymerase subunit Rpo1C (393 aa).

This sequence belongs to the RNA polymerase beta' chain family. Part of the 13-subunit RNA polymerase complex. Interacts with TFS4.

Its subcellular location is the cytoplasm. The catalysed reaction is RNA(n) + a ribonucleoside 5'-triphosphate = RNA(n+1) + diphosphate. Its function is as follows. DNA-dependent RNA polymerase (RNAP) catalyzes the transcription of DNA into RNA using the four ribonucleoside triphosphates as substrates. Forms part of the jaw domain. In terms of biological role, reconstitution experiments show this subunit is required for basic activity. The polypeptide is DNA-directed RNA polymerase subunit Rpo1C (Sulfolobus acidocaldarius (strain ATCC 33909 / DSM 639 / JCM 8929 / NBRC 15157 / NCIMB 11770)).